Here is a 258-residue protein sequence, read N- to C-terminus: Regulatory protein RecX (258 aa).

The protein belongs to the RecX family.

The protein localises to the cytoplasm. Modulates RecA activity. The chain is Regulatory protein RecX from Streptococcus pyogenes serotype M3 (strain ATCC BAA-595 / MGAS315).